We begin with the raw amino-acid sequence, 174 residues long: Putative FAS1 domain-containing protein 096L (174 aa).

In terms of domain architecture, FAS1 spans 36–171; it reads PDTLWSKLNE…GIIHLMEEVY (136 aa).

The chain is Putative FAS1 domain-containing protein 096L from Acheta domesticus (House cricket).